Here is a 338-residue protein sequence, read N- to C-terminus: tRNA dimethylallyltransferase (338 aa).

An ATP-binding site is contributed by Gly13–Thr20. Position 15 to 20 (Thr15 to Thr20) interacts with substrate. 2 interaction with substrate tRNA regions span residues Asp38–Leu41 and Gln162–Arg166.

Belongs to the IPP transferase family. Monomer. Mg(2+) serves as cofactor.

It carries out the reaction adenosine(37) in tRNA + dimethylallyl diphosphate = N(6)-dimethylallyladenosine(37) in tRNA + diphosphate. Functionally, catalyzes the transfer of a dimethylallyl group onto the adenine at position 37 in tRNAs that read codons beginning with uridine, leading to the formation of N6-(dimethylallyl)adenosine (i(6)A). This chain is tRNA dimethylallyltransferase, found in Cellvibrio japonicus (strain Ueda107) (Pseudomonas fluorescens subsp. cellulosa).